A 301-amino-acid polypeptide reads, in one-letter code: Homoserine O-acetyltransferase (301 aa).

Catalysis depends on C142, which acts as the Acyl-thioester intermediate. K163 and S192 together coordinate substrate. H235 serves as the catalytic Proton acceptor. Residue E237 is part of the active site. R249 serves as a coordination point for substrate.

It belongs to the MetA family.

The protein localises to the cytoplasm. The enzyme catalyses L-homoserine + acetyl-CoA = O-acetyl-L-homoserine + CoA. The protein operates within amino-acid biosynthesis; L-methionine biosynthesis via de novo pathway; O-acetyl-L-homoserine from L-homoserine: step 1/1. Functionally, transfers an acetyl group from acetyl-CoA to L-homoserine, forming acetyl-L-homoserine. The protein is Homoserine O-acetyltransferase of Bacillus cereus (strain ATCC 14579 / DSM 31 / CCUG 7414 / JCM 2152 / NBRC 15305 / NCIMB 9373 / NCTC 2599 / NRRL B-3711).